We begin with the raw amino-acid sequence, 311 residues long: Short chain dehydrogenase opdN (311 aa).

6 residues coordinate NADP(+): Leu48, Lys73, Glu96, Asn123, Tyr217, and Lys221. The Proton donor role is filled by Tyr217. Lys221 functions as the Lowers pKa of active site Tyr in the catalytic mechanism.

The protein belongs to the short-chain dehydrogenases/reductases (SDR) family.

It participates in secondary metabolite biosynthesis. Its function is as follows. Short chain dehydrogenase; part of the gene cluster that mediates the biosynthesis of oxopyrrolidines, polyketide-amino acid hybrid compounds with feature structures of tetramic acid. Does not seem to play a role in oxopyrrolidines A and B biosynthesis. May be involved in further modifications of these oxopyrrolidines. This is Short chain dehydrogenase opdN from Penicillium oxalicum (strain 114-2 / CGMCC 5302) (Penicillium decumbens).